The sequence spans 188 residues: Threonylcarbamoyl-AMP synthase (188 aa).

The 186-residue stretch at 3 to 188 folds into the YrdC-like domain; it reads QLQPSAVATT…RSGQILRNGS (186 aa).

Belongs to the SUA5 family. TsaC subfamily.

It localises to the cytoplasm. The catalysed reaction is L-threonine + hydrogencarbonate + ATP = L-threonylcarbamoyladenylate + diphosphate + H2O. Required for the formation of a threonylcarbamoyl group on adenosine at position 37 (t(6)A37) in tRNAs that read codons beginning with adenine. Catalyzes the conversion of L-threonine, HCO(3)(-)/CO(2) and ATP to give threonylcarbamoyl-AMP (TC-AMP) as the acyladenylate intermediate, with the release of diphosphate. The chain is Threonylcarbamoyl-AMP synthase from Shewanella frigidimarina (strain NCIMB 400).